The following is a 514-amino-acid chain: Protein Tube (514 aa).

5 disordered regions span residues 226–250 (VPQQ…RSSR), 255–274 (TASN…SNTA), 324–343 (LDAG…STST), 366–385 (ASDA…VPDM), and 413–514 (NGAK…ELQQ). Over residues 259–274 (VAPTTASNAPSASNTA) the composition is skewed to low complexity. Residues 422 to 433 (ADNNSSGTNSLS) are compositionally biased toward polar residues. Over residues 434–460 (NDDDEQKEDDDDDDDDDVVDVDDEEAD) the composition is skewed to acidic residues. Residues 477–514 (TTVTCTSGENSFEFTNDSSSASNDDYTNNIPNLSELQQ) show a composition bias toward polar residues.

As to expression, maternal and zygotic gene product.

It is found in the cytoplasm. Its function is as follows. Required for the determination of embryonic dorsoventral polarity. Is involved in transduction of information regulating nuclear import of dorsal protein. This chain is Protein Tube (tub), found in Drosophila virilis (Fruit fly).